Here is a 1247-residue protein sequence, read N- to C-terminus: Probable phosphorylase b kinase regulatory subunit alpha (1247 aa).

The tract at residues 853 to 883 (LKGLYEKACQQKLWGLVRHTAGMLGKRVEDL) is calmodulin-binding. Phosphoserine occurs at positions 1030 and 1033. Residues 1052 to 1089 (DRQGQWLRRRRLDGALNRVPRDFYSRVWTVLEKCQGLA) are calmodulin-binding. Cysteine 1244 carries the S-farnesyl cysteine lipid modification.

The protein belongs to the phosphorylase b kinase regulatory chain family. Post-translationally, although the final Cys may be farnesylated, the terminal tripeptide is probably not removed, and the C-terminus is not methylated.

The protein resides in the cell membrane. The protein operates within glycan biosynthesis; glycogen metabolism. In terms of biological role, phosphorylase b kinase catalyzes the phosphorylation of serine in certain substrates, including troponin I. The alpha chain may bind calmodulin. The sequence is that of Probable phosphorylase b kinase regulatory subunit alpha from Drosophila melanogaster (Fruit fly).